A 216-amino-acid chain; its full sequence is Oligoribonuclease (216 aa).

The region spanning 6–171 (VVWMDCEMTG…ADIKESIREL (166 aa)) is the Exonuclease domain. Tyrosine 128 is a catalytic residue.

The protein belongs to the oligoribonuclease family.

The protein resides in the cytoplasm. 3'-to-5' exoribonuclease specific for small oligoribonucleotides. This is Oligoribonuclease from Nocardia farcinica (strain IFM 10152).